The following is a 594-amino-acid chain: Alpha-1,4-glucan:maltose-1-phosphate maltosyltransferase (594 aa).

The segment at 244-270 is disordered; that stretch reads NRKGRNNSLTPGPDDPGSPYAIGSEEG. The alpha-maltose 1-phosphate site is built by K246, Q306, and D341. Residue D377 is the Nucleophile of the active site. N378 is a binding site for alpha-maltose 1-phosphate. The active-site Proton donor is E406. Residue 517–518 participates in alpha-maltose 1-phosphate binding; sequence KY.

It belongs to the glycosyl hydrolase 13 family. GlgE subfamily. As to quaternary structure, homodimer.

It carries out the reaction alpha-maltose 1-phosphate + [(1-&gt;4)-alpha-D-glucosyl](n) = [(1-&gt;4)-alpha-D-glucosyl](n+2) + phosphate. Functionally, maltosyltransferase that uses maltose 1-phosphate (M1P) as the sugar donor to elongate linear or branched alpha-(1-&gt;4)-glucans. Is involved in a branched alpha-glucan biosynthetic pathway from trehalose, together with TreS, Mak and GlgB. The sequence is that of Alpha-1,4-glucan:maltose-1-phosphate maltosyltransferase from Cereibacter sphaeroides (Rhodobacter sphaeroides).